A 352-amino-acid chain; its full sequence is Serine protease 55 (352 aa).

An N-terminal signal peptide occupies residues 1-18; sequence MLLFSVLLLLSLVTGTQL. The 233-residue stretch at 68-300 folds into the Peptidase S1 domain; the sequence is ITGGMEAEVG…YNLWIEKVTQ (233 aa). A disulfide bond links Cys-93 and Cys-109. Residues His-108 and Asp-156 each act as charge relay system in the active site. 3 disulfides stabilise this stretch: Cys-189-Cys-256, Cys-222-Cys-235, and Cys-246-Cys-276. N-linked (GlcNAc...) asparagine glycosylation is present at Asn-240. Ser-250 (charge relay system) is an active-site residue. Residues 308–330 form a disordered region; it reads AEKRRTSVKQKPMGSPVSGVPEP. The span at 319–330 shows a compositional bias: low complexity; the sequence is PMGSPVSGVPEP. The GPI-anchor amidated serine moiety is linked to residue Ser-325. The propeptide at 326–352 is removed in mature form; it reads GVPEPGSPRSWLLLCPLSHVLFRAILY.

Belongs to the peptidase S1 family. Only detected in testis. Expressed in spermatogonia, spermatocytes, spermatids, Leydig and Sertoli cells. Expressed in prostate cancer and ovarian cancer (at protein level).

It localises to the cell membrane. The protein localises to the cytoplasm. Its subcellular location is the cytosol. Functionally, probable serine protease, which plays a crucial role in the fertility of male mice including sperm migration and sperm-egg interaction. The protein is Serine protease 55 (PRSS55) of Homo sapiens (Human).